The sequence spans 910 residues: Harmonin (910 aa).

Residues 1–86 (MDRKVAREFR…LTPRRSRKLK (86 aa)) form an N-terminal domain region. 2 consecutive PDZ domains span residues 87 to 171 (EVRL…GLIP) and 211 to 295 (KVFI…AGRE). Positions 194–833 (GVRGGLGSPG…KAWNQGGDWI (640 aa)) are mediates interaction with MYO7B. Ser-219 is subject to Phosphoserine. 2 coiled-coil regions span residues 299–377 (TDRE…WEED) and 417–482 (TIRK…DLEE). The disordered stretch occupies residues 563-688 (VMPHPPSVNS…PPRGPGVSTI (126 aa)). Over residues 564–582 (MPHPPSVNSPSKVPAPPVL) the composition is skewed to pro residues. Over residues 583 to 596 (PSSGHVSSSSSPWV) the composition is skewed to low complexity. Residues 599 to 611 (TPPPIPIPPPPSI) are compositionally biased toward pro residues. Polar residues predominate over residues 650-664 (NTHSGKPSSSPTTER). The PDZ 3 domain occupies 752–839 (DVRLLRIKKE…GDWIDLVVAV (88 aa)). Residues 890–910 (KSRERNQTDPSWRPASSAPSP) form a disordered region. Positions 899–910 (PSWRPASSAPSP) are enriched in low complexity.

Part of the IMAC/intermicrovillar adhesion complex/intermicrovillar tip-link complex composed of ANKS4B, MYO7B, USH1C, CDHR2 and CDHR5. Part of a complex composed of USH1C, USH1G and MYO7A. Interacts with F-actin. Interacts with USH2A. Interacts with SLC4A7. Interacts (via PDZ1 domain) with the C-terminus of USHBP1. Interacts (via N-terminus and PDZ 2 domain) with CDH23. Interacts with USH1G. Interacts with MYO7B. Interacts with CDHR2 and CDHR5; may mediate their interaction with MYO7B at the microvilli tip. Interacts (via PDZ 1 domain) with ANKS4B. Interacts (via PDZ 1 domain) with DOCK4. In terms of tissue distribution, detected in stereocilia of cochlear hair cells (at protein level). Isoform 1 is expressed in the eye, cochlea, vestibule, heart, kidney, small intestine and testis; it is barely visible in skeletal muscle, liver, and lung and is absent from the brain. Isoforms 2 and 3 are expressed in the cochlea and vestibule.

It is found in the cytoplasm. Its subcellular location is the cytosol. The protein localises to the cytoskeleton. The protein resides in the cell projection. It localises to the microvillus. Anchoring/scaffolding protein that is a part of the functional network formed by USH1C, USH1G, CDH23 and MYO7A that mediates mechanotransduction in cochlear hair cells. Required for normal development and maintenance of cochlear hair cell bundles. As part of the intermicrovillar adhesion complex/IMAC plays a role in brush border differentiation, controlling microvilli organization and length. Probably plays a central regulatory role in the assembly of the complex, recruiting CDHR2, CDHR5 and MYO7B to the microvilli tips. The polypeptide is Harmonin (Ush1c) (Mus musculus (Mouse)).